The chain runs to 255 residues: Imidazole glycerol phosphate synthase subunit HisF (255 aa).

Active-site residues include aspartate 11 and aspartate 130.

The protein belongs to the HisA/HisF family. Heterodimer of HisH and HisF.

The protein localises to the cytoplasm. The catalysed reaction is 5-[(5-phospho-1-deoxy-D-ribulos-1-ylimino)methylamino]-1-(5-phospho-beta-D-ribosyl)imidazole-4-carboxamide + L-glutamine = D-erythro-1-(imidazol-4-yl)glycerol 3-phosphate + 5-amino-1-(5-phospho-beta-D-ribosyl)imidazole-4-carboxamide + L-glutamate + H(+). It functions in the pathway amino-acid biosynthesis; L-histidine biosynthesis; L-histidine from 5-phospho-alpha-D-ribose 1-diphosphate: step 5/9. IGPS catalyzes the conversion of PRFAR and glutamine to IGP, AICAR and glutamate. The HisF subunit catalyzes the cyclization activity that produces IGP and AICAR from PRFAR using the ammonia provided by the HisH subunit. The protein is Imidazole glycerol phosphate synthase subunit HisF of Rhodopseudomonas palustris (strain ATCC BAA-98 / CGA009).